The following is a 583-amino-acid chain: ATP-dependent lipid A-core flippase (583 aa).

7 helical membrane passes run 18–38 (LWPIINPFKIGLIIASITLII), 65–85 (IFMWMPLVLMGLMIMRGMSGF), 105–127 (LLFNHIMNMPVSFFIEQSTATLM), 143–163 (GALITIIREGASVVGLCIMMF), 167–187 (WQLSLVLILIMPIISIIIKLV), 252–272 (VFEPLIQFVASLALACVLYIA), and 277–297 (VIEMLSAGTITVIFSSMIALM). Positions 30-312 (IIASITLIIN…LTNVSAQFQR (283 aa)) constitute an ABC transmembrane type-1 domain. Residues 344 to 580 (IIFDNVTFFY…KGVYSQLYKF (237 aa)) form the ABC transporter domain. 378 to 385 (GRSGSGKS) serves as a coordination point for ATP.

It belongs to the ABC transporter superfamily. Lipid exporter (TC 3.A.1.106) family. As to quaternary structure, homodimer.

It localises to the cell inner membrane. It catalyses the reaction ATP + H2O + lipid A-core oligosaccharideSide 1 = ADP + phosphate + lipid A-core oligosaccharideSide 2.. Functionally, involved in lipopolysaccharide (LPS) biosynthesis. Translocates lipid A-core from the inner to the outer leaflet of the inner membrane. Transmembrane domains (TMD) form a pore in the inner membrane and the ATP-binding domain (NBD) is responsible for energy generation. This is ATP-dependent lipid A-core flippase from Blochmanniella floridana.